Reading from the N-terminus, the 648-residue chain is MVLSKRPVRISKACENCRKRKVKCSGGDVCFECQKYNENCVYRQFYRKIKRLKYNNDNSKIDNFSNEQMNIPEFISVRNLNDDSSSIEFFGPASNISFVNQLNHYLRKAERNGYDFLSEGQNDITPEEERKGLEKFGMKLMVLKDNANNFDFSLSNITTEKMNGLLIAYLETWHIPCPIFKAEDLFNLSVRTWKNPSASVHDKALLYLILSIGSAASYFDLQSNSSTLPLARGFFNLALRTVPHIFTELSLDAIRIVFFMSVSAGNLGDTALSYLYSGTAVRMSLAIGLHKCKNFSNDLSDKYQNIRLWVSVWQWEGYWSFCVGRPSCSRQDIPIPAVPNEAFSFSGYGEHGRFLINHEHMRLRVFFSSCCSKIQSEIYSTNRNLLSVLQTVEQISKEVDKEYFSSTNHQLIRSEIGEYCKTLDINSCREWFWIRIYYLYLKLMIFRPFLIFLAYVNISKTSAPDDIIEGLKRGSDQCVQEAIDISKFIVQLNRKVRMLQPIFFICTYLESACTVLLFYIASNSAKIQGQLATEIWAVLRDTCSFLQGSSGPYVGSVSTIAKDALESLNNILVSKKYQDNSVNNTYFDKVMQHVLVHSPAFDDSSDPKFETNRSETPTQYTLDDSANDELMIPDLQGFWEQTLDWINN.

The segment at residues 13–42 is a DNA-binding region (zn(2)-C6 fungal-type); the sequence is ACENCRKRKVKCSGGDVCFECQKYNENCVY.

Monomer.

It is found in the nucleus. May be involved in the facilitation of anaphase progression in mitosis. The protein is Zinc finger protein grt1 (grt1) of Schizosaccharomyces pombe (strain 972 / ATCC 24843) (Fission yeast).